The following is a 152-amino-acid chain: Succinate dehydrogenase [ubiquinone] cytochrome b small subunit, mitochondrial (152 aa).

A mitochondrion-targeting transit peptide spans 1 to 21; the sequence is MATLLRVSSLCRANRASAFKS. At 22 to 56 the chain is on the mitochondrial matrix side; the sequence is LLIRPVPCLTQDHHMVQTSQIHTSPNHHAGSKAAS. The chain crosses the membrane as a helical span at residues 57 to 78; it reads MHWTSERALSVALLGLLPAAYL. Residues 79–83 are Mitochondrial intermembrane-facing; that stretch reads YPGAA. The chain crosses the membrane as a helical span at residues 84–104; sequence MDYSLAAALTLHGHWGLGQVV. Heme b is bound at residue H95. The Mitochondrial matrix segment spans residues 105 to 113; that stretch reads TDYVHGDAK. Y107 contacts a ubiquinone. Residues 114 to 135 form a helical membrane-spanning segment; sequence IKMANTSLFALSALTFAGLCYF. The Mitochondrial intermembrane portion of the chain corresponds to 136-152; that stretch reads NYHDVGICKAVSMLWSL.

It belongs to the CybS family. As to quaternary structure, component of complex II composed of four subunits: the flavoprotein (FP) SDHA, iron-sulfur protein (IP) SDHB, and a cytochrome b560 composed of SDHC and SDHD.

It localises to the mitochondrion inner membrane. It functions in the pathway carbohydrate metabolism; tricarboxylic acid cycle. Functionally, membrane-anchoring subunit of succinate dehydrogenase (SDH) that is involved in complex II of the mitochondrial electron transport chain and is responsible for transferring electrons from succinate to ubiquinone (coenzyme Q). SDH also oxidizes malate to the non-canonical enol form of oxaloacetate, enol-oxaloacetate. Enol-oxaloacetate, which is a potent inhibitor of the succinate dehydrogenase activity, is further isomerized into keto-oxaloacetate. The sequence is that of Succinate dehydrogenase [ubiquinone] cytochrome b small subunit, mitochondrial (sdhd) from Xenopus tropicalis (Western clawed frog).